We begin with the raw amino-acid sequence, 151 residues long: Small ribosomal subunit protein uS15 (151 aa).

It belongs to the universal ribosomal protein uS15 family. Component of the small ribosomal subunit. Part of the small subunit (SSU) processome, composed of more than 70 proteins and the RNA chaperone small nucleolar RNA (snoRNA) U3.

The protein resides in the cytoplasm. It localises to the nucleus. Its subcellular location is the nucleolus. Its function is as follows. Component of the small ribosomal subunit. The ribosome is a large ribonucleoprotein complex responsible for the synthesis of proteins in the cell. Part of the small subunit (SSU) processome, first precursor of the small eukaryotic ribosomal subunit. During the assembly of the SSU processome in the nucleolus, many ribosome biogenesis factors, an RNA chaperone and ribosomal proteins associate with the nascent pre-rRNA and work in concert to generate RNA folding, modifications, rearrangements and cleavage as well as targeted degradation of pre-ribosomal RNA by the RNA exosome. The sequence is that of Small ribosomal subunit protein uS15 (rps-13) from Caenorhabditis elegans.